The sequence spans 231 residues: Deoxyribose-phosphate aldolase (231 aa).

D86 serves as the catalytic Proton donor/acceptor. The Schiff-base intermediate with acetaldehyde role is filled by K147. K172 serves as the catalytic Proton donor/acceptor. The interval 206–231 (WQAETAGETVTEPESDRDGADTTDGY) is disordered.

This sequence belongs to the DeoC/FbaB aldolase family. DeoC type 1 subfamily.

It localises to the cytoplasm. The catalysed reaction is 2-deoxy-D-ribose 5-phosphate = D-glyceraldehyde 3-phosphate + acetaldehyde. The protein operates within carbohydrate degradation; 2-deoxy-D-ribose 1-phosphate degradation; D-glyceraldehyde 3-phosphate and acetaldehyde from 2-deoxy-alpha-D-ribose 1-phosphate: step 2/2. Functionally, catalyzes a reversible aldol reaction between acetaldehyde and D-glyceraldehyde 3-phosphate to generate 2-deoxy-D-ribose 5-phosphate. This is Deoxyribose-phosphate aldolase from Haloarcula marismortui (strain ATCC 43049 / DSM 3752 / JCM 8966 / VKM B-1809) (Halobacterium marismortui).